We begin with the raw amino-acid sequence, 157 residues long: Putative pre-16S rRNA nuclease (157 aa).

The protein belongs to the YqgF nuclease family.

It is found in the cytoplasm. Could be a nuclease involved in processing of the 5'-end of pre-16S rRNA. In Nitrosomonas eutropha (strain DSM 101675 / C91 / Nm57), this protein is Putative pre-16S rRNA nuclease.